The following is a 290-amino-acid chain: 33 kDa chaperonin (290 aa).

Intrachain disulfides connect cysteine 235–cysteine 237 and cysteine 268–cysteine 271.

This sequence belongs to the HSP33 family. In terms of processing, under oxidizing conditions two disulfide bonds are formed involving the reactive cysteines. Under reducing conditions zinc is bound to the reactive cysteines and the protein is inactive.

The protein localises to the cytoplasm. Functionally, redox regulated molecular chaperone. Protects both thermally unfolding and oxidatively damaged proteins from irreversible aggregation. Plays an important role in the bacterial defense system toward oxidative stress. The protein is 33 kDa chaperonin of Streptococcus pyogenes serotype M6 (strain ATCC BAA-946 / MGAS10394).